The primary structure comprises 505 residues: Protein disulfide-isomerase (505 aa).

The N-terminal stretch at 1 to 20 is a signal peptide; sequence MHKAQKFALGLLAAAAVATA. Thioredoxin domains lie at 21–128 and 335–465; these read SDVV…QSLP and FVAG…ENGK. Catalysis depends on nucleophile residues Cys50, Cys53, Cys385, and Cys388. Intrachain disulfides connect Cys50–Cys53 and Cys385–Cys388. The tract at residues 470 to 505 is disordered; it reads ISEDAEETSSATETTTETATKSEEAAKETATEHDEL. The segment covering 477 to 488 has biased composition (low complexity); that stretch reads TSSATETTTETA. A compositionally biased stretch (basic and acidic residues) spans 489–505; it reads TKSEEAAKETATEHDEL. The Prevents secretion from ER motif lies at 502–505; it reads HDEL.

It belongs to the protein disulfide isomerase family.

The protein resides in the endoplasmic reticulum lumen. The catalysed reaction is Catalyzes the rearrangement of -S-S- bonds in proteins.. Its function is as follows. Participates in the folding of proteins containing disulfide bonds, may be involved in glycosylation, prolyl hydroxylation and triglyceride transfer. This is Protein disulfide-isomerase from Humicola insolens (Soft-rot fungus).